The primary structure comprises 155 residues: Small ribosomal subunit protein uS7cz/uS7cy (155 aa).

This sequence belongs to the universal ribosomal protein uS7 family. In terms of assembly, part of the 30S ribosomal subunit.

It is found in the plastid. It localises to the chloroplast. In terms of biological role, one of the primary rRNA binding proteins, it binds directly to 16S rRNA where it nucleates assembly of the head domain of the 30S subunit. In Lemna minor (Common duckweed), this protein is Small ribosomal subunit protein uS7cz/uS7cy (rps7-A).